A 407-amino-acid polypeptide reads, in one-letter code: GTPase Obg (407 aa).

An Obg domain is found at 1–159 (MKFVDEVSIR…RDLKMEMKVL (159 aa)). Residues 127-150 (NTRFKSSTNRAPRQTTPGKPGDQR) form a disordered region. Positions 129 to 143 (RFKSSTNRAPRQTTP) are enriched in polar residues. The 174-residue stretch at 160-333 (ADVGLLGLPN…LSHDLMRYLE (174 aa)) folds into the OBG-type G domain. GTP is bound by residues 166-173 (GLPNAGKS), 191-195 (FTTLV), 213-216 (DIPG), 283-286 (NKAD), and 314-316 (SAI). Serine 173 and threonine 193 together coordinate Mg(2+). The tract at residues 378-407 (VKSVHDIGDDDDWDDFEDDEDGPEIIYVRD) is disordered. The segment covering 385–400 (GDDDDWDDFEDDEDGP) has biased composition (acidic residues).

It belongs to the TRAFAC class OBG-HflX-like GTPase superfamily. OBG GTPase family. In terms of assembly, monomer. Requires Mg(2+) as cofactor.

The protein localises to the cytoplasm. An essential GTPase which binds GTP, GDP and possibly (p)ppGpp with moderate affinity, with high nucleotide exchange rates and a fairly low GTP hydrolysis rate. Plays a role in control of the cell cycle, stress response, ribosome biogenesis and in those bacteria that undergo differentiation, in morphogenesis control. The chain is GTPase Obg from Pseudomonas entomophila (strain L48).